The sequence spans 457 residues: Nuclear hormone receptor family member nhr-20 (457 aa).

The segment at residues 16–92 is a DNA-binding region (nuclear receptor); the sequence is TSKCLVCEHP…AGMRRECVQK (77 aa). NR C4-type zinc fingers lie at residues 19-40 and 56-80; these read CLVC…CLAC and CKKD…FDKC. The segment at 125-182 is disordered; it reads GDQTDDNSPLSIEKKSPPGLLPNDSPMMADFKFDPSDIPSTSGGSTQRLERSPSPKLA. Polar residues predominate over residues 162-171; it reads IPSTSGGSTQ. Residues 201 to 457 enclose the NR LBD domain; it reads QLKNSMDRRR…DALSKSLLTL (257 aa).

Belongs to the nuclear hormone receptor family.

It is found in the nucleus. In terms of biological role, orphan nuclear receptor. This is Nuclear hormone receptor family member nhr-20 (nhr-20) from Caenorhabditis elegans.